The chain runs to 352 residues: Mitochondrial adenine nucleotide transporter ADNT1 (352 aa).

Solcar repeat units follow at residues 36 to 123, 139 to 227, and 242 to 343; these read KSIC…ASNG, LTPL…LKDW, and LTVV…VKDV. 6 helical membrane-spanning segments follow: residues 41 to 61, 100 to 120, 145 to 162, 202 to 221, 242 to 263, and 324 to 340; these read SLFA…PLER, GTNC…YEQA, LGAG…TYPM, GWLP…FSVY, LTVV…TIAY, and VKVV…YEMV.

The protein belongs to the mitochondrial carrier (TC 2.A.29) family. In terms of tissue distribution, expressed in seedling radicles and roots, vasculature of cotyledons, leaf primordia, leaves and sepals.

It localises to the mitochondrion inner membrane. Its activity is regulated as follows. Inhibited by pyridoxal 5-phosphate, bathophenanthroline, mersalyl, p-hydroxymercuribenzoate and tannic acid. In terms of biological role, mitochondrial adenylate carrier that catalyzes specifically the transport of ATP, ADP and AMP by a counter-exchange mechanism across the inner mitochondrial membrane. Substrate preference in reconstituted proteoliposomes is ATP &gt; AMP &gt; ADP. May play a role in oxidative phosphorylation and be important for the provision of energy required to support growth in heterotrophic tissues. This is Mitochondrial adenine nucleotide transporter ADNT1 (ADNT1) from Arabidopsis thaliana (Mouse-ear cress).